A 326-amino-acid polypeptide reads, in one-letter code: Malate dehydrogenase (326 aa).

An NAD(+)-binding site is contributed by 12 to 18 (GGTGQIA). Substrate-binding residues include R93 and R99. Residues N106, Q113, and 130–132 (VGN) each bind NAD(+). Substrate-binding residues include N132 and R163. The active-site Proton acceptor is the H188.

It belongs to the LDH/MDH superfamily. MDH type 2 family.

The catalysed reaction is (S)-malate + NAD(+) = oxaloacetate + NADH + H(+). Catalyzes the reversible oxidation of malate to oxaloacetate. The polypeptide is Malate dehydrogenase (Chlamydia trachomatis serovar L2 (strain ATCC VR-902B / DSM 19102 / 434/Bu)).